Reading from the N-terminus, the 1200-residue chain is Zinc finger protein 804A (1200 aa).

A C2H2-type zinc finger spans residues 57-81 (FYCELCDKQYYKHQEFDNHINSYDH). Disordered stretches follow at residues 252–280 (STSH…PEAM), 343–367 (DGPV…RTSA), 582–687 (HWFH…NCGG), 727–777 (EDDG…SDES), 799–828 (QPKK…NYPM), and 874–949 (PYNP…TNPE). Residues 585–603 (HKSRRKKKRRKLCRYHPGK) show a composition bias toward basic residues. Basic and acidic residues predominate over residues 604–666 (SSKEPEGSGK…ASTHLGEKET (63 aa)). Polar residues-rich tracts occupy residues 667–687 (MNTT…NCGG) and 732–756 (LASQ…SLTN). Residues 800-811 (PKKKRRRKRSRL) are compositionally biased toward basic residues. The segment covering 891–944 (TETTPCDSSQTSNDLATPVNVTRDPSNSTTDNTLLEHNQRSQTTNSNEKQTPFK) has biased composition (polar residues).

This Mus musculus (Mouse) protein is Zinc finger protein 804A (Znf804a).